The following is a 156-amino-acid chain: MKIIEGNLSLKGDEKIAIINARFNHIITDRLVEGAKDAFLRHGGKEENLSLILVPGAFEIPFALKQACESKKFDGICCVGAVIRGSTPHFDYVAAETTKGIASVGLGANVPVSFGVLTTDTLEQAIERAGSKAGNKGFEAMLTVVEMLNLIQKIKA.

Residues phenylalanine 23, 57–59 (AFE), and 81–83 (AVI) contribute to the 5-amino-6-(D-ribitylamino)uracil site. 86–87 (ST) contacts (2S)-2-hydroxy-3-oxobutyl phosphate. Catalysis depends on histidine 89, which acts as the Proton donor. Residue phenylalanine 114 participates in 5-amino-6-(D-ribitylamino)uracil binding. Residue arginine 128 participates in (2S)-2-hydroxy-3-oxobutyl phosphate binding.

It belongs to the DMRL synthase family.

It catalyses the reaction (2S)-2-hydroxy-3-oxobutyl phosphate + 5-amino-6-(D-ribitylamino)uracil = 6,7-dimethyl-8-(1-D-ribityl)lumazine + phosphate + 2 H2O + H(+). It participates in cofactor biosynthesis; riboflavin biosynthesis; riboflavin from 2-hydroxy-3-oxobutyl phosphate and 5-amino-6-(D-ribitylamino)uracil: step 1/2. Functionally, catalyzes the formation of 6,7-dimethyl-8-ribityllumazine by condensation of 5-amino-6-(D-ribitylamino)uracil with 3,4-dihydroxy-2-butanone 4-phosphate. This is the penultimate step in the biosynthesis of riboflavin. In Campylobacter lari (strain RM2100 / D67 / ATCC BAA-1060), this protein is 6,7-dimethyl-8-ribityllumazine synthase.